Consider the following 214-residue polypeptide: Large ribosomal subunit protein uL1 (214 aa).

The protein belongs to the universal ribosomal protein uL1 family. Part of the 50S ribosomal subunit.

In terms of biological role, binds directly to 23S rRNA. Probably involved in E site tRNA release. Its function is as follows. Protein L1 is also a translational repressor protein, it controls the translation of its operon by binding to its mRNA. This is Large ribosomal subunit protein uL1 from Methanoregula boonei (strain DSM 21154 / JCM 14090 / 6A8).